The sequence spans 103 residues: ATP synthase F(0) complex subunit g, mitochondrial (103 aa).

Position 2 is an N-acetylalanine (alanine 2). An N6-acetyllysine mark is found at lysine 11, lysine 24, lysine 35, and lysine 54.

As to quaternary structure, component of the ATP synthase complex composed at least of ATP5F1A/subunit alpha, ATP5F1B/subunit beta, ATP5MC1/subunit c (homooctomer), MT-ATP6/subunit a, MT-ATP8/subunit 8, ATP5ME/subunit e, ATP5MF/subunit f, ATP5MG/subunit g, ATP5MK/subunit k, ATP5MJ/subunit j, ATP5F1C/subunit gamma, ATP5F1D/subunit delta, ATP5F1E/subunit epsilon, ATP5PF/subunit F6, ATP5PB/subunit b, ATP5PD/subunit d, ATP5PO/subunit OSCP. ATP synthase complex consists of a soluble F(1) head domain (subunits alpha(3) and beta(3)) - the catalytic core - and a membrane F(0) domain - the membrane proton channel (subunits c, a, 8, e, f, g, k and j). These two domains are linked by a central stalk (subunits gamma, delta, and epsilon) rotating inside the F1 region and a stationary peripheral stalk (subunits F6, b, d, and OSCP).

The protein resides in the mitochondrion. It localises to the mitochondrion inner membrane. Subunit g, of the mitochondrial membrane ATP synthase complex (F(1)F(0) ATP synthase or Complex V) that produces ATP from ADP in the presence of a proton gradient across the membrane which is generated by electron transport complexes of the respiratory chain. ATP synthase complex consist of a soluble F(1) head domain - the catalytic core - and a membrane F(1) domain - the membrane proton channel. These two domains are linked by a central stalk rotating inside the F(1) region and a stationary peripheral stalk. During catalysis, ATP synthesis in the catalytic domain of F(1) is coupled via a rotary mechanism of the central stalk subunits to proton translocation. In vivo, can only synthesize ATP although its ATP hydrolase activity can be activated artificially in vitro. Part of the complex F(0) domain. The chain is ATP synthase F(0) complex subunit g, mitochondrial from Bos taurus (Bovine).